The primary structure comprises 242 residues: Type III pantothenate kinase (242 aa).

7–14 (DLGNSRFK) lines the ATP pocket. Substrate is bound by residues Y91 and 98–101 (GVDR). Residue D100 is the Proton acceptor of the active site. Position 121 (T121) interacts with ATP. T171 is a binding site for substrate.

Belongs to the type III pantothenate kinase family. Homodimer. The cofactor is NH4(+). K(+) is required as a cofactor.

The protein resides in the cytoplasm. It catalyses the reaction (R)-pantothenate + ATP = (R)-4'-phosphopantothenate + ADP + H(+). It participates in cofactor biosynthesis; coenzyme A biosynthesis; CoA from (R)-pantothenate: step 1/5. In terms of biological role, catalyzes the phosphorylation of pantothenate (Pan), the first step in CoA biosynthesis. This is Type III pantothenate kinase from Xanthomonas campestris pv. campestris (strain B100).